The primary structure comprises 293 residues: Ethanolamine ammonia-lyase small subunit (293 aa).

Adenosylcob(III)alamin-binding residues include Val207 and Glu228.

This sequence belongs to the EutC family. The basic unit is a heterodimer which dimerizes to form tetramers. The heterotetramers trimerize; 6 large subunits form a core ring with 6 small subunits projecting outwards. The cofactor is adenosylcob(III)alamin.

It localises to the bacterial microcompartment. The enzyme catalyses ethanolamine = acetaldehyde + NH4(+). It functions in the pathway amine and polyamine degradation; ethanolamine degradation. Functionally, catalyzes the deamination of various vicinal amino-alcohols to oxo compounds. Allows this organism to utilize ethanolamine as the sole source of nitrogen and carbon in the presence of external vitamin B12. The polypeptide is Ethanolamine ammonia-lyase small subunit (Listeria monocytogenes serotype 4a (strain HCC23)).